Here is a 184-residue protein sequence, read N- to C-terminus: ATP-dependent protease subunit HslV (184 aa).

The active site involves Thr12. Na(+) is bound by residues Ala166, Cys169, and Thr172.

The protein belongs to the peptidase T1B family. HslV subfamily. As to quaternary structure, a double ring-shaped homohexamer of HslV is capped on each side by a ring-shaped HslU homohexamer. The assembly of the HslU/HslV complex is dependent on binding of ATP.

The protein localises to the cytoplasm. It catalyses the reaction ATP-dependent cleavage of peptide bonds with broad specificity.. Allosterically activated by HslU binding. Protease subunit of a proteasome-like degradation complex believed to be a general protein degrading machinery. This chain is ATP-dependent protease subunit HslV, found in Nitrobacter winogradskyi (strain ATCC 25391 / DSM 10237 / CIP 104748 / NCIMB 11846 / Nb-255).